Reading from the N-terminus, the 433-residue chain is Leucine-rich repeat extensin-like protein 7 (433 aa).

The N-terminal stretch at 1 to 21 is a signal peptide; the sequence is MRIYQPTLLIFTTVVLLSISA. Asparagine 71 carries N-linked (GlcNAc...) asparagine glycosylation. LRR repeat units lie at residues 98–122, 123–145, 146–170, 171–194, 196–217, 219–239, 241–265, 266–289, and 290–313; these read VKTV…LGLL, TDIA…GFSQ, LSLL…VIGL, PKLK…LFDK, LDAL…MGNS, VSVL…SFGK, GKTL…MGLL, QNVT…MGQM, and ENLE…LCSL. A glycan (N-linked (GlcNAc...) asparagine) is linked at asparagine 267. N-linked (GlcNAc...) asparagine glycosylation occurs at asparagine 340. Residues 380–433 are disordered; that stretch reads FSPPPSQISPSSQPLAPAPSPTSPPLSTPPPARPCPPVYSPPPPPPLSLAPSMN. Residues 381 to 433 are contains the Ser-Pro(4) repeats; it reads SPPPSQISPSSQPLAPAPSPTSPPLSTPPPARPCPPVYSPPPPPPLSLAPSMN. Pro residues predominate over residues 395 to 427; it reads APAPSPTSPPLSTPPPARPCPPVYSPPPPPPLS.

Hydroxylated on proline residues in the S-P-P-P-P repeat. In terms of processing, O-glycosylated on hydroxyprolines. Expressed in flowers and pollen.

The protein localises to the secreted. It localises to the cell wall. Functionally, modulates cell morphogenesis by regulating cell wall formation and assembly, and/or growth polarization. This Arabidopsis thaliana (Mouse-ear cress) protein is Leucine-rich repeat extensin-like protein 7 (LRX7).